Reading from the N-terminus, the 383-residue chain is Succinyl-diaminopimelate desuccinylase (383 aa).

His-73 is a Zn(2+) binding site. Asp-75 is a catalytic residue. Asp-107 contributes to the Zn(2+) binding site. Glu-141 acts as the Proton acceptor in catalysis. 3 residues coordinate Zn(2+): Glu-142, Glu-170, and His-356.

Belongs to the peptidase M20A family. DapE subfamily. As to quaternary structure, homodimer. It depends on Zn(2+) as a cofactor. The cofactor is Co(2+).

It catalyses the reaction N-succinyl-(2S,6S)-2,6-diaminopimelate + H2O = (2S,6S)-2,6-diaminopimelate + succinate. It participates in amino-acid biosynthesis; L-lysine biosynthesis via DAP pathway; LL-2,6-diaminopimelate from (S)-tetrahydrodipicolinate (succinylase route): step 3/3. Catalyzes the hydrolysis of N-succinyl-L,L-diaminopimelic acid (SDAP), forming succinate and LL-2,6-diaminopimelate (DAP), an intermediate involved in the bacterial biosynthesis of lysine and meso-diaminopimelic acid, an essential component of bacterial cell walls. The protein is Succinyl-diaminopimelate desuccinylase of Pseudomonas aeruginosa (strain ATCC 15692 / DSM 22644 / CIP 104116 / JCM 14847 / LMG 12228 / 1C / PRS 101 / PAO1).